The primary structure comprises 328 residues: GMP reductase (328 aa).

Catalysis depends on Cys-174, which acts as the Thioimidate intermediate. 203 to 226 is a binding site for NADP(+); sequence IIADGGIRTHGDIAKSIRFGASMV.

Belongs to the IMPDH/GMPR family. GuaC type 2 subfamily.

The enzyme catalyses IMP + NH4(+) + NADP(+) = GMP + NADPH + 2 H(+). Its function is as follows. Catalyzes the irreversible NADPH-dependent deamination of GMP to IMP. It functions in the conversion of nucleobase, nucleoside and nucleotide derivatives of G to A nucleotides, and in maintaining the intracellular balance of A and G nucleotides. The polypeptide is GMP reductase (Staphylococcus saprophyticus subsp. saprophyticus (strain ATCC 15305 / DSM 20229 / NCIMB 8711 / NCTC 7292 / S-41)).